Here is a 130-residue protein sequence, read N- to C-terminus: Guanylate kinase (130 aa).

In terms of domain architecture, Guanylate kinase-like spans 1-130; that stretch reads KIFEDPTTSY…EKIQSRVNEA (130 aa).

The protein belongs to the guanylate kinase family.

Its subcellular location is the cytoplasm. It catalyses the reaction GMP + ATP = GDP + ADP. Functionally, essential for recycling GMP and indirectly, cGMP. The sequence is that of Guanylate kinase (gmk) from Staphylococcus epidermidis.